The chain runs to 245 residues: tRNA (guanine-N(7)-)-methyltransferase (245 aa).

Residues glycine 70, 93–94, 126–127, and leucine 146 contribute to the S-adenosyl-L-methionine site; these read EI and NA. The active site involves aspartate 149. 224–226 lines the S-adenosyl-L-methionine pocket; it reads SEE.

Belongs to the class I-like SAM-binding methyltransferase superfamily. TrmB family.

The protein localises to the nucleus. The enzyme catalyses guanosine(46) in tRNA + S-adenosyl-L-methionine = N(7)-methylguanosine(46) in tRNA + S-adenosyl-L-homocysteine. It functions in the pathway tRNA modification; N(7)-methylguanine-tRNA biosynthesis. In terms of biological role, catalyzes the formation of N(7)-methylguanine at position 46 (m7G46) in tRNA. The protein is tRNA (guanine-N(7)-)-methyltransferase of Aedes aegypti (Yellowfever mosquito).